We begin with the raw amino-acid sequence, 223 residues long: Small ribosomal subunit protein uS3 (223 aa).

The KH type-2 domain occupies 38–106; sequence IREFIAKQLT…RVHINIVEIK (69 aa).

Belongs to the universal ribosomal protein uS3 family. In terms of assembly, part of the 30S ribosomal subunit. Forms a tight complex with proteins S10 and S14.

Binds the lower part of the 30S subunit head. Binds mRNA in the 70S ribosome, positioning it for translation. The protein is Small ribosomal subunit protein uS3 of Pediococcus pentosaceus (strain ATCC 25745 / CCUG 21536 / LMG 10740 / 183-1w).